Here is a 135-residue protein sequence, read N- to C-terminus: Small ribosomal subunit protein uS11 (135 aa).

It belongs to the universal ribosomal protein uS11 family. As to quaternary structure, part of the 30S ribosomal subunit. Interacts with proteins S7 and S18. Binds to IF-3.

Located on the platform of the 30S subunit, it bridges several disparate RNA helices of the 16S rRNA. Forms part of the Shine-Dalgarno cleft in the 70S ribosome. The protein is Small ribosomal subunit protein uS11 of Corynebacterium urealyticum (strain ATCC 43042 / DSM 7109).